Consider the following 537-residue polypeptide: Cytochrome P450 monooxygenase yanC (537 aa).

Residues 1–21 (MALVHLTALAACGLLLVILRA) form the signal peptide. C449 is a heme binding site.

This sequence belongs to the cytochrome P450 family. It depends on heme as a cofactor.

It participates in secondary metabolite biosynthesis; terpenoid biosynthesis. Its function is as follows. Cytochrome P450 monooxygenase; part of the gene cluster that mediates the biosynthesis of yanuthone D, a fungal isoprenoid epoxycyclohexenone that acts as an antibiotic against fungi and bacteria. The first step of the pathway is the synthesis of 6-methylsalicylic acid (6-MSA) by the polyketide synthase yanA. 6-MSA is then converted to m-cresol by the decarboxylase yanB. The cytochrome P450 monooxygenase yanC then catalyzes the oxidation of m-cresol to toluquinol. Epoxidation of toluquinol is then performed by the short chain dehydrogenase yanD, with the help of yanE, and a further prenylation by yanG leads to 7-deacetoxyyanuthone A. The next step is the hydroxylation of C-22 of 7-deacetoxyyanuthone A by the cytochrome P450 monooxygenase yanH to yield 22-deacetylyanuthone A. O-Mevalon transferase yanI then attaches mevalon to the hydroxyl group of 22-deacetylyanuthone A to produce yanuthone E. Finally, the FAD-dependent monooxygenase yanF oxidizes the hydroxyl group at C15 of yanuthone E to form yanuthone D. Furthermore, several branching points in the pathway lead to the production of yanuthones F and G from 7-deacetoxyyanuthone A; yanuthones H and I from 22-deacetylyanuthone A; and yanuthone J from yanuthone E. YanC is also involved in the synthesis of yanuthone X1 which does not have 6-methylsalicylic acid (6-MSA) as precursor. The protein is Cytochrome P450 monooxygenase yanC of Aspergillus niger (strain ATCC 1015 / CBS 113.46 / FGSC A1144 / LSHB Ac4 / NCTC 3858a / NRRL 328 / USDA 3528.7).